Reading from the N-terminus, the 93-residue chain is Small ribosomal subunit protein uS19 (93 aa).

The protein belongs to the universal ribosomal protein uS19 family.

Its function is as follows. Protein S19 forms a complex with S13 that binds strongly to the 16S ribosomal RNA. In Leptospira borgpetersenii serovar Hardjo-bovis (strain JB197), this protein is Small ribosomal subunit protein uS19.